Reading from the N-terminus, the 678-residue chain is Beta-catenin-like protein hmp-2 (678 aa).

5 ARM repeats span residues 153–192 (RGGPLLIFRSGGLAEIIRMLYDSLESVVHYAVTTLRNLLM), 280–319 (PSNKPALISLGCLPALYVELCTAKDERSQTAILVAMRNLS), 320–359 (DSATNEENLTQLIIKLLEIIRVANDGMTACACGTLSNLTC), 362–403 (TRNK…HCTA), and 409–448 (EEAQSELRFCQAFPVILDQLETLRTPVIKAALGVIRNSAL).

It belongs to the beta-catenin family. As to quaternary structure, component of a core catenin-cadherin complex consisting of hmr-1, hmp-1 and hmp-2; the complex localizes to adherens junctions. Interacts with hmr-1; the interaction is direct. May interact with hmp-1. Interacts with frk-1. Epidermal cells.

The protein localises to the cell junction. It is found in the adherens junction. In terms of biological role, required for cell migration during body enclosure and cell shape changes during body elongation. Plays a role in recruitment of the cadherin protein hmr-1 to adherens junctions. The polypeptide is Beta-catenin-like protein hmp-2 (hmp-2) (Caenorhabditis elegans).